We begin with the raw amino-acid sequence, 315 residues long: Pantothenate synthetase (315 aa).

45–52 lines the ATP pocket; sequence MGALHEGH. His52 serves as the catalytic Proton donor. Position 77 (Gln77) interacts with (R)-pantoate. A beta-alanine-binding site is contributed by Gln77. 163–166 serves as a coordination point for ATP; the sequence is GEKD. Gln169 contacts (R)-pantoate. Residues Val192 and 200–203 each bind ATP; that span reads MSSR.

It belongs to the pantothenate synthetase family. Homodimer.

Its subcellular location is the cytoplasm. It carries out the reaction (R)-pantoate + beta-alanine + ATP = (R)-pantothenate + AMP + diphosphate + H(+). The protein operates within cofactor biosynthesis; (R)-pantothenate biosynthesis; (R)-pantothenate from (R)-pantoate and beta-alanine: step 1/1. Catalyzes the condensation of pantoate with beta-alanine in an ATP-dependent reaction via a pantoyl-adenylate intermediate. The sequence is that of Pantothenate synthetase from Mycobacterium ulcerans (strain Agy99).